The following is a 403-amino-acid chain: Phosphoglycerate kinase (403 aa).

Substrate contacts are provided by residues 21–23 (DFN), R36, 59–62 (HLGR), R119, and R154. Residues K207, G299, E330, and 357-360 (GGDA) contribute to the ATP site.

This sequence belongs to the phosphoglycerate kinase family. As to quaternary structure, monomer.

The protein resides in the cytoplasm. It catalyses the reaction (2R)-3-phosphoglycerate + ATP = (2R)-3-phospho-glyceroyl phosphate + ADP. The protein operates within carbohydrate degradation; glycolysis; pyruvate from D-glyceraldehyde 3-phosphate: step 2/5. The sequence is that of Phosphoglycerate kinase from Chlamydia abortus (strain DSM 27085 / S26/3) (Chlamydophila abortus).